The sequence spans 77 residues: DNA-directed RNA polymerase subunit epsilon (77 aa).

The protein belongs to the RNA polymerase subunit epsilon family. RNAP is composed of a core of 2 alpha, a beta and a beta' subunit. The core is associated with a delta subunit, and at least one of epsilon or omega. When a sigma factor is associated with the core the holoenzyme is formed, which can initiate transcription.

It catalyses the reaction RNA(n) + a ribonucleoside 5'-triphosphate = RNA(n+1) + diphosphate. Its function is as follows. A non-essential component of RNA polymerase (RNAP). The protein is DNA-directed RNA polymerase subunit epsilon of Lactobacillus delbrueckii subsp. bulgaricus (strain ATCC 11842 / DSM 20081 / BCRC 10696 / JCM 1002 / NBRC 13953 / NCIMB 11778 / NCTC 12712 / WDCM 00102 / Lb 14).